Here is a 549-residue protein sequence, read N- to C-terminus: Serine/threonine-protein phosphatase PPQ (549 aa).

A compositionally biased stretch (polar residues) spans 1–13 (MRRSPSRSNNNFA). Disordered stretches follow at residues 1-50 (MRRS…RSLP), 64-85 (YNTLASAGKNNNNKRASNDNLL), 133-158 (TSSTTTATTSNNILTSPSYRESNYSS), and 189-219 (SRVKSPSSSVKAGSFGAPSSPTSGIPNPKSS). Composition is skewed to low complexity over residues 16-32 (NCSTNSNSSQQQLTTPS) and 68-83 (ASAGKNNNNKRASNDN). Residues 205–217 (APSSPTSGIPNPK) are compositionally biased toward polar residues. Positions 301, 303, 329, and 361 each coordinate Mn(2+). Catalysis depends on His362, which acts as the Proton donor. Mn(2+) contacts are provided by His410 and His485.

It belongs to the PPP phosphatase family. PP-Z subfamily. Mn(2+) serves as cofactor.

It catalyses the reaction O-phospho-L-seryl-[protein] + H2O = L-seryl-[protein] + phosphate. The catalysed reaction is O-phospho-L-threonyl-[protein] + H2O = L-threonyl-[protein] + phosphate. In terms of biological role, phosphatase involved in the regulation of protein synthesis. Affects translational accuracy. The polypeptide is Serine/threonine-protein phosphatase PPQ (PPQ1) (Saccharomyces cerevisiae (strain ATCC 204508 / S288c) (Baker's yeast)).